A 365-amino-acid chain; its full sequence is Chaperone protein DnaJ (365 aa).

In terms of domain architecture, J spans 4–70 (DYYKILGVDR…QKRRMYDQTG (67 aa)). The CR-type zinc-finger motif lies at 139–220 (GTEKRIKYRR…CNGTGTVVVN (82 aa)). Zn(2+) contacts are provided by Cys152, Cys155, Cys168, Cys171, Cys194, Cys197, Cys208, and Cys211. CXXCXGXG motif repeat units follow at residues 152 to 159 (CPDCNGTG), 168 to 175 (CPTCNGTG), 194 to 201 (CQTCGGRG), and 208 to 215 (CPRCNGTG).

It belongs to the DnaJ family. In terms of assembly, homodimer. Zn(2+) is required as a cofactor.

Its subcellular location is the cytoplasm. In terms of biological role, participates actively in the response to hyperosmotic and heat shock by preventing the aggregation of stress-denatured proteins and by disaggregating proteins, also in an autonomous, DnaK-independent fashion. Unfolded proteins bind initially to DnaJ; upon interaction with the DnaJ-bound protein, DnaK hydrolyzes its bound ATP, resulting in the formation of a stable complex. GrpE releases ADP from DnaK; ATP binding to DnaK triggers the release of the substrate protein, thus completing the reaction cycle. Several rounds of ATP-dependent interactions between DnaJ, DnaK and GrpE are required for fully efficient folding. Also involved, together with DnaK and GrpE, in the DNA replication of plasmids through activation of initiation proteins. The sequence is that of Chaperone protein DnaJ from Thermoplasma acidophilum (strain ATCC 25905 / DSM 1728 / JCM 9062 / NBRC 15155 / AMRC-C165).